Consider the following 480-residue polypeptide: Immune evasion protein OPG047 (480 aa).

The BTB domain maps to 10–90 (CKNILALSMT…SYTGKVYIDS (81 aa)). Residues 125 to 223 (CVECYMMGIE…NYLSPRGINN (99 aa)) enclose the BACK domain. 5 Kelch repeats span residues 273–319 (VVYL…PANN), 320–363 (KLYV…SINN), 365–408 (IYVM…VFGR), 410–447 (LFLVGRNAEFYCESSNTWTLIDDPIYPRDNPELIIVDN), and 448–480 (KLLLIGGFYRGSYIDTIEVYNHHTYSWNIWDGK).

This sequence belongs to the orthopoxvirus OPG047 family.

Might have a role in the suppression of host immune response. The polypeptide is Immune evasion protein OPG047 (OPG047) (Vaccinia virus (strain Copenhagen) (VACV)).